The following is a 123-amino-acid chain: Small ribosomal subunit protein bS18 (123 aa).

The span at Met-1 to Pro-10 shows a compositional bias: polar residues. Residues Met-1–Lys-52 form a disordered region. Over residues Thr-20–Pro-34 the composition is skewed to gly residues.

Belongs to the bacterial ribosomal protein bS18 family. Part of the 30S ribosomal subunit. Forms a tight heterodimer with protein bS6.

Binds as a heterodimer with protein bS6 to the central domain of the 16S rRNA, where it helps stabilize the platform of the 30S subunit. This Koribacter versatilis (strain Ellin345) protein is Small ribosomal subunit protein bS18.